Reading from the N-terminus, the 557-residue chain is uncharacterized protein (557 aa).

The first 30 residues, 1 to 30 (MAPRRRRHTRIAGLRVVGTATLVAATTLTA), serve as a signal peptide directing secretion. A lipid anchor (N-palmitoyl cysteine) is attached at Cys31. A lipid anchor (S-diacylglycerol cysteine) is attached at Cys31.

It to M.bovis Mb2616c and M.leprae ML0489.

The protein localises to the cell membrane. This is an uncharacterized protein from Mycobacterium tuberculosis (strain ATCC 25618 / H37Rv).